Reading from the N-terminus, the 440-residue chain is Ran-specific GTPase-activating protein 30 (440 aa).

Positions 1–314 (MDEILAKAGS…LVLKIDRSDD (314 aa)) constitute a RanBD1 domain. At T272 the chain carries Phosphothreonine. Over residues 341 to 371 (IEEDEEEDEEEDEEEGKDGEERKEEEEEENK) the composition is skewed to acidic residues. The interval 341 to 375 (IEEDEEEDEEEDEEEGKDGEERKEEEEEENKLEDK) is disordered.

Interacts with GSP1.

It localises to the cytoplasm. It is found in the nucleus. Functionally, important for the export of protein containing nuclear export signal (NES) out of the nucleus. Stimulates the GTPase activity of GSP1. The protein is Ran-specific GTPase-activating protein 30 (YRB30) of Saccharomyces cerevisiae (strain ATCC 204508 / S288c) (Baker's yeast).